The following is a 2261-amino-acid chain: Phospholipid-transporting ATPase ABCA1 (2261 aa).

Cysteine 3 carries S-palmitoyl cysteine lipidation. An N-linked (GlcNAc...) asparagine glycan is attached at asparagine 14. Residues 22 to 42 (TCQLLLEVAWPLFIFLILISV) form a helical membrane-spanning segment. Cysteine 23 carries S-palmitoyl cysteine lipidation. The Extracellular portion of the chain corresponds to 43–639 (RLSYPPYEQH…DIFLRVMSRS (597 aa)). Residues 69–80 (WVQGIICNANNP) form an annulus domain 1 region. Cysteines 75 and 309 form a disulfide. 8 N-linked (GlcNAc...) asparagine glycosylation sites follow: asparagine 98, asparagine 151, asparagine 161, asparagine 196, asparagine 244, asparagine 292, asparagine 337, and asparagine 349. An annulus domain 2 region spans residues 368–379 (SRIIWKALKPLL). Asparagine 400, asparagine 478, asparagine 489, and asparagine 521 each carry an N-linked (GlcNAc...) asparagine glycan. The segment at 564 to 594 (ERTNKIKDGYWDPGPRADPFEDMRYVWGGFA) is gateway domain. The next 5 helical transmembrane spans lie at 640–660 (MPLF…KSIV), 683–703 (FSWF…LVVI), 716–736 (SVVF…CFLI), 745–765 (LAAA…VLCV), and 777–797 (IFAS…FALF). N-linked (GlcNAc...) asparagine glycosylation occurs at asparagine 820. A helical membrane pass occupies residues 827 to 847 (MMLFDTFLYGVMTWYIEAVFP). An ABC transporter 1 domain is found at 899 to 1131 (VSIQNLVKVY…LGTGYYLTLV (233 aa)). 933-940 (GHNGAGKT) lines the ATP pocket. Residues 941 to 961 (TTMSILTGLFPPTSGTAYILG) form a helical membrane-spanning segment. Serine 1042 is subject to Phosphoserine; by PKA. S-palmitoyl cysteine attachment occurs at residues cysteine 1110 and cysteine 1111. 2 N-linked (GlcNAc...) asparagine glycosylation sites follow: asparagine 1144 and asparagine 1294. The interval 1285 to 1310 (FTEDDAVDPNDSDIDPESRETDLLSG) is disordered. Positions 1287–1299 (EDDAVDPNDSDID) are enriched in acidic residues. A Phosphoserine modification is found at serine 1296. A helical membrane pass occupies residues 1351 to 1371 (IVLPAVFVCIALVFSLIVPPF). Residues 1372 to 1656 (GKYPSLELQP…ALMTTSVDVL (285 aa)) are Extracellular-facing. Asparagine 1453 carries an N-linked (GlcNAc...) asparagine glycan. An intrachain disulfide couples cysteine 1463 to cysteine 1477. Asparagine 1499, asparagine 1504, and asparagine 1637 each carry an N-linked (GlcNAc...) asparagine glycan. A run of 6 helical transmembrane segments spans residues 1657 to 1677 (VSIC…VFLI), 1703 to 1723 (FVWD…IFIC), 1735 to 1755 (LPVL…LMYP), 1768 to 1788 (VVLT…TFVL), 1802 to 1822 (ILKS…LIDM), and 1852 to 1872 (NLFA…LIQY). The 233-residue stretch at 1912–2144 (LEIKELTKIY…FGDGYTIVVR (233 aa)) folds into the ABC transporter 2 domain. Residue 1946–1953 (GVNGAGKS) coordinates ATP. Residue asparagine 2044 is glycosylated (N-linked (GlcNAc...) asparagine). Serine 2054 carries the phosphoserine; by PKA modification. Asparagine 2238 carries an N-linked (GlcNAc...) asparagine glycan.

This sequence belongs to the ABC transporter superfamily. ABCA family. In terms of assembly, interacts with MEGF10. May interact with APOE1; functionally associated with APOE1 in the biogenesis of HDLs. Interacts with ABCA8; this interaction potentiates cholesterol efflux. Interacts with ABCA12 and NR1H2; this interaction is required for ABCA1 localization to the cell surface and is necessary for its normal activity and stability. Phosphorylation on Ser-2054 regulates phospholipid efflux. In terms of processing, palmitoylated by ZDHHC8. Palmitoylation is essential for localization to the plasma membrane. In terms of tissue distribution, widely expressed in adult tissues. Highest levels are found in pregnant uterus and uterus.

The protein localises to the cell membrane. It localises to the endosome. It carries out the reaction ATP + H2O + phospholipidSide 1 = ADP + phosphate + phospholipidSide 2.. The enzyme catalyses a 1,2-diacyl-sn-glycero-3-phosphocholine(out) + ATP + H2O = a 1,2-diacyl-sn-glycero-3-phosphocholine(in) + ADP + phosphate + H(+). It catalyses the reaction a 1,2-diacyl-sn-glycero-3-phospho-L-serine(out) + ATP + H2O = a 1,2-diacyl-sn-glycero-3-phospho-L-serine(in) + ADP + phosphate + H(+). The catalysed reaction is a sphingomyelin(in) + ATP + H2O = a sphingomyelin(out) + ADP + phosphate + H(+). It carries out the reaction cholesterol(in) + ATP + H2O = cholesterol(out) + ADP + phosphate + H(+). ATPase activity is decreased by cholesterol and ceramide. ATPase activity is stimulated by phosphatidylcholine and to a lesser degree by phosphatidylserine and sphingomyelin. Phospholipid translocase activity is highly reduced by berylium fluoride and aluminum flouride and reduced by N-ethylmaleimide. Catalyzes the translocation of specific phospholipids from the cytoplasmic to the extracellular/lumenal leaflet of membrane coupled to the hydrolysis of ATP. Thereby, participates in phospholipid transfer to apolipoproteins to form nascent high density lipoproteins/HDLs. Transports preferentially phosphatidylcholine over phosphatidylserine. May play a similar role in the efflux of intracellular cholesterol to apolipoproteins and the formation of nascent high density lipoproteins/HDLs. Translocates phospholipids from the outer face of the plasma membrane and forces it through its gateway and annulus into an elongated hydrophobic tunnel in its extracellular domain. This Mus musculus (Mouse) protein is Phospholipid-transporting ATPase ABCA1.